We begin with the raw amino-acid sequence, 209 residues long: Xanthine phosphoribosyltransferase 1 (209 aa).

S79 carries the phosphoserine modification.

The protein resides in the cytoplasm. Functionally, may act as a xanthine phosphoribosyltransferase involved in the synthesis of purine nucleotides. Such activity is however unclear in vivo. This chain is Xanthine phosphoribosyltransferase 1 (XPT1), found in Saccharomyces cerevisiae (strain ATCC 204508 / S288c) (Baker's yeast).